Here is a 658-residue protein sequence, read N- to C-terminus: MTQLAIGEATPHGATYDGHGVNFTLFSAHAERVELCVFDSRGNERRYDLPGRRGDVWHGYLAGARPGLRYGYRVHGPWQPAQGHRFNPAKLLLDPYARRVEGELKDHPLLHGGHDEPDYRDNAAVAPKSVIISDHYDWEDDAAPRTPWGKTVIYEAHVKGLTYLHPELPQEIRGTYKALGHPVMVAYFKQLGITALELLPVAQFASEPRLQRMGLTNYWGYNPMAMFALHPAWASSPETALDEFRDAVKALHRAGIEVILDIVLNHSAELDLDGPTFSLRGIDNRSYYWIRDDGDYHNWTGCGNTLNLSHPGVVEYACECLRYWVETCHVDGFRFDLASVMGRTPTFRQDAPLFAAIKACPVLSTVKLIAEPWDIGEGGYQVGNFPPPFAEWNDHFRDAARRFWLPRNLTTGEFACRFAASSDVFKRNGRTPGASVNLLTAHDGFTLRDCVCFNQKHNEANGEENRDGTNSNYSDNHGKEGLGGPLDLMERRRDSIHALLATLLLSQGTPMLLAGDEHGHSQHGNNNAYCQDNALTWLDWQQANRGLTTFTAALIRLRQQIPALTGNSWWEEGDGNVRWLNKNAQPLSADEWQNGPKLMQILLSDRFLIAINATLEVTDIVLPEGEWRAVPPFAGEDNPVITAVWQGPAHGLCVFQRG.

Asp-336 functions as the Nucleophile in the catalytic mechanism. The Proton donor role is filled by Glu-371. A disordered region spans residues 459–483; that stretch reads EANGEENRDGTNSNYSDNHGKEGLG.

It belongs to the glycosyl hydrolase 13 family.

The catalysed reaction is Hydrolysis of (1-&gt;6)-alpha-D-glucosidic linkages to branches with degrees of polymerization of three or four glucose residues in limit dextrin.. Its pathway is glycan degradation; glycogen degradation. Removes maltotriose and maltotetraose chains that are attached by 1,6-alpha-linkage to the limit dextrin main chain, generating a debranched limit dextrin. The chain is Glycogen debranching enzyme from Salmonella agona (strain SL483).